A 1037-amino-acid chain; its full sequence is PH and SEC7 domain-containing protein 3 (1037 aa).

Positions 37–70 are disordered; sequence EEKTPDSSDHGGSTLLPPTVTNEFPEYGTMEEGG. Serine 76 is modified (phosphoserine). Disordered stretches follow at residues 169–189, 236–255, 262–284, 304–335, and 353–375; these read TASH…GKSP, RVPE…HNPV, REQR…SMGR, EAES…ACGV, and APSE…ESGE. Low complexity predominate over residues 237–251; it reads VPESACPVSSSSAGS. Over residues 262-277 the composition is skewed to basic and acidic residues; that stretch reads REQRSDLGREHPRGYD. Residues 515–723 enclose the SEC7 domain; the sequence is NSVYTRGPQE…KALYNSIKNE (209 aa). Residues 730–747 are compositionally biased toward basic and acidic residues; that stretch reads DDEEKKKSPSEGTDEKAN. Positions 730 to 762 are disordered; it reads DDEEKKKSPSEGTDEKANGTHPKTISRIGSTTN. The segment covering 750 to 762 has biased composition (polar residues); the sequence is HPKTISRIGSTTN. Serine 759 is modified (phosphoserine). The 114-residue stretch at 774 to 887 folds into the PH domain; sequence AVYKSGFLAR…WINKINCVAA (114 aa). A coiled-coil region spans residues 911 to 941; it reads ATTTKLSQEEQLKSHESKLKQITTELAEHRS. Residues 984–1037 are disordered; sequence LLTTDGNEPVGLKKSHSSPSLNPDASPVTAKVKRNVSERKDHRPETPGIKQKVT. Residues serine 998, serine 1000, serine 1001, serine 1003, and serine 1009 each carry the phosphoserine modification. Positions 1018-1028 are enriched in basic and acidic residues; that stretch reads NVSERKDHRPE.

As to expression, ubiquitously expressed, with highest levels in liver. Present in brain, with highest levels in olfactory bulb, cortex, hippocampal pyramidal cell layer and cerebellar granule cell layer (at protein level).

The protein resides in the cell membrane. The protein localises to the cell projection. Its subcellular location is the ruffle membrane. It localises to the postsynaptic density. Functionally, guanine nucleotide exchange factor for ARF6. The protein is PH and SEC7 domain-containing protein 3 (Psd3) of Mus musculus (Mouse).